Here is a 314-residue protein sequence, read N- to C-terminus: MEFSMNATVEQLAPVEQQATAGWVVAALYQFKEVQDPADLQQRLLDLVKTINLCGTLIVAGEGINGTVAGDREAIDTIHQFLLNEGFNAMEYKESHSSDKPFRKMKIKLKKEIVTLGVEVKPRDLVGHYLDPKEWNELIARDDVILIDTRNDYEYKAGTFKGAIDPKTETFREFPEYVKKELEQHKDKKIAMFCTGGIRCEKSTSLLLQEGFKEVYHLKGGILKYLEETPPDESLWEGECFVFDGRTAVTHGVEEGANIKCHACGWPLTPEESALPSYEHGVSCLYCIDKTTEKQKAGFRMRQSQIAAAKHKRL.

Residues Ala140–Ser234 form the Rhodanese domain. Cys194 acts as the Cysteine persulfide intermediate in catalysis.

Belongs to the TrhO family.

It catalyses the reaction uridine(34) in tRNA + AH2 + O2 = 5-hydroxyuridine(34) in tRNA + A + H2O. Catalyzes oxygen-dependent 5-hydroxyuridine (ho5U) modification at position 34 in tRNAs. This is tRNA uridine(34) hydroxylase from Acinetobacter baumannii (strain SDF).